Here is a 155-residue protein sequence, read N- to C-terminus: Protein PtsT (155 aa).

This is Protein PtsT (ptsT) from Geobacillus stearothermophilus (Bacillus stearothermophilus).